The chain runs to 131 residues: D-ribose pyranase (131 aa).

The active-site Proton donor is H20. Residues D28, H98, and 120-122 contribute to the substrate site; that span reads YAN.

It belongs to the RbsD / FucU family. RbsD subfamily. In terms of assembly, homodecamer.

Its subcellular location is the cytoplasm. The enzyme catalyses beta-D-ribopyranose = beta-D-ribofuranose. The protein operates within carbohydrate metabolism; D-ribose degradation; D-ribose 5-phosphate from beta-D-ribopyranose: step 1/2. Its function is as follows. Catalyzes the interconversion of beta-pyran and beta-furan forms of D-ribose. This chain is D-ribose pyranase, found in Bacillus cereus (strain AH187).